Consider the following 92-residue polypeptide: MKFEAVLRTDLGKGASRRLRNTGYFPAIVYGGEAAPVSISLNHDDVMNQMDKPEFYEAIVLVIDGQEVKVKPQDVQRHAYKPKVEHMDFIRI.

It belongs to the bacterial ribosomal protein bL25 family. In terms of assembly, part of the 50S ribosomal subunit; part of the 5S rRNA/L5/L18/L25 subcomplex. Contacts the 5S rRNA. Binds to the 5S rRNA independently of L5 and L18.

This is one of the proteins that binds to the 5S RNA in the ribosome where it forms part of the central protuberance. The sequence is that of Large ribosomal subunit protein bL25 from Vibrio cholerae serotype O1 (strain ATCC 39541 / Classical Ogawa 395 / O395).